A 302-amino-acid chain; its full sequence is GTP cyclohydrolase FolE2 (302 aa).

Belongs to the GTP cyclohydrolase IV family.

The catalysed reaction is GTP + H2O = 7,8-dihydroneopterin 3'-triphosphate + formate + H(+). It functions in the pathway cofactor biosynthesis; 7,8-dihydroneopterin triphosphate biosynthesis; 7,8-dihydroneopterin triphosphate from GTP: step 1/1. In terms of biological role, converts GTP to 7,8-dihydroneopterin triphosphate. This Pseudoalteromonas translucida (strain TAC 125) protein is GTP cyclohydrolase FolE2.